The following is a 122-amino-acid chain: Large ribosomal subunit protein uL14 (122 aa).

This sequence belongs to the universal ribosomal protein uL14 family. Part of the 50S ribosomal subunit. Forms a cluster with proteins L3 and L19. In the 70S ribosome, L14 and L19 interact and together make contacts with the 16S rRNA in bridges B5 and B8.

Its function is as follows. Binds to 23S rRNA. Forms part of two intersubunit bridges in the 70S ribosome. In Coxiella burnetii (strain RSA 331 / Henzerling II), this protein is Large ribosomal subunit protein uL14.